Here is a 302-residue protein sequence, read N- to C-terminus: 33 kDa chaperonin (302 aa).

2 disulfides stabilise this stretch: C255/C257 and C288/C291.

The protein belongs to the HSP33 family. Under oxidizing conditions two disulfide bonds are formed involving the reactive cysteines. Under reducing conditions zinc is bound to the reactive cysteines and the protein is inactive.

It is found in the cytoplasm. Redox regulated molecular chaperone. Protects both thermally unfolding and oxidatively damaged proteins from irreversible aggregation. Plays an important role in the bacterial defense system toward oxidative stress. In Caulobacter vibrioides (strain ATCC 19089 / CIP 103742 / CB 15) (Caulobacter crescentus), this protein is 33 kDa chaperonin.